The chain runs to 740 residues: Alpha-1,6-mannosylglycoprotein 6-beta-N-acetylglucosaminyltransferase A (740 aa).

The Cytoplasmic portion of the chain corresponds to 1–13 (MAFFTPWKLSSQK). The chain crosses the membrane as a helical; Signal-anchor for type II membrane protein span at residues 14–30 (LGFFLVTFGFIWGMMLL). At 31 to 740 (HFTIQQRTQP…GQVALCKDCL (710 aa)) the chain is on the lumenal side. N-linked (GlcNAc...) asparagine glycosylation is found at asparagine 109, asparagine 114, and asparagine 117. Cystine bridges form between cysteine 144–cysteine 182, cysteine 155–cysteine 195, cysteine 171–cysteine 337, cysteine 371–cysteine 625, cysteine 648–cysteine 723, cysteine 652–cysteine 725, cysteine 659–cysteine 712, cysteine 680–cysteine 701, and cysteine 736–cysteine 739. Positions 212–740 (NSLAEIRTDF…GQVALCKDCL (529 aa)) are sufficient for catalytic activity. Asparagine 333 is a glycosylation site (N-linked (GlcNAc...) asparagine). 377–378 (DS) is a substrate binding site. N-linked (GlcNAc...) asparagine glycosylation is found at asparagine 432 and asparagine 446. Glutamate 525 provides a ligand contact to UDP-N-acetyl-alpha-D-glucosamine. Position 553 (lysine 553) interacts with substrate.

The protein belongs to the glycosyltransferase 18 family. In terms of processing, N-glycosylated. Post-translationally, a secreted form is released from the membrane after cleavage by gamma-secretase.

It is found in the golgi apparatus membrane. The protein localises to the secreted. The catalysed reaction is N(4)-{beta-D-GlcNAc-(1-&gt;2)-[beta-D-GlcNAc-(1-&gt;4)]-alpha-D-Man-(1-&gt;3)-[beta-D-GlcNAc-(1-&gt;2)-alpha-D-Man-(1-&gt;6)]-beta-D-Man-(1-&gt;4)-beta-D-GlcNAc-(1-&gt;4)-beta-D-GlcNAc}-L-asparaginyl-[protein] + UDP-N-acetyl-alpha-D-glucosamine = N(4)-{beta-D-GlcNAc-(1-&gt;2)-[beta-D-GlcNAc-(1-&gt;4)]-alpha-D-Man-(1-&gt;3)-[beta-D-GlcNAc-(1-&gt;2)-[beta-D-GlcNAc-(1-&gt;6)]-alpha-D-Man-(1-&gt;6)]-beta-D-Man-(1-&gt;4)-beta-D-GlcNAc-(1-&gt;4)-beta-D-GlcNAc}-L-asparaginyl-[protein] + UDP + H(+). Its pathway is protein modification; protein glycosylation. Its function is as follows. Catalyzes the addition of N-acetylglucosamine (GlcNAc) in beta 1-6 linkage to the alpha-linked mannose of biantennary N-linked oligosaccharides. Catalyzes an important step in the biosynthesis of branched, complex-type N-glycans, such as those found on EGFR, TGFR (TGF-beta receptor) and CDH2. Via its role in the biosynthesis of complex N-glycans, plays an important role in the activation of cellular signaling pathways, reorganization of the actin cytoskeleton, cell-cell adhesion and cell migration. MGAT5-dependent EGFR N-glycosylation enhances the interaction between EGFR and LGALS3 and thereby prevents rapid EGFR endocytosis and prolongs EGFR signaling. Required for efficient interaction between TGFB1 and its receptor. Enhances activation of intracellular signaling pathways by several types of growth factors, including FGF2, PDGF, IGF, TGFB1 and EGF. MGAT5-dependent CDH2 N-glycosylation inhibits CDH2-mediated homotypic cell-cell adhesion and contributes to the regulation of downstream signaling pathways. Promotes cell migration. Contributes to the regulation of the inflammatory response. MGAT5-dependent TCR N-glycosylation enhances the interaction between TCR and LGALS3, limits agonist-induced TCR clustering, and thereby dampens TCR-mediated responses to antigens. Required for normal leukocyte evasation and accumulation at sites of inflammation. Inhibits attachment of monocytes to the vascular endothelium and subsequent monocyte diapedesis. Promotes proliferation of umbilical vein endothelial cells and angiogenesis, at least in part by promoting the release of the growth factor FGF2 from the extracellular matrix. The polypeptide is Alpha-1,6-mannosylglycoprotein 6-beta-N-acetylglucosaminyltransferase A (MGAT5) (Cricetulus griseus (Chinese hamster)).